Consider the following 93-residue polypeptide: UPF0358 protein LMHCC_1561 (93 aa).

This sequence belongs to the UPF0358 family.

This is UPF0358 protein LMHCC_1561 from Listeria monocytogenes serotype 4a (strain HCC23).